A 483-amino-acid chain; its full sequence is Glutamyl-tRNA(Gln) amidotransferase subunit A (483 aa).

Residues Lys-75 and Ser-150 each act as charge relay system in the active site. The active-site Acyl-ester intermediate is the Ser-174.

The protein belongs to the amidase family. GatA subfamily. Heterotrimer of A, B and C subunits.

The catalysed reaction is L-glutamyl-tRNA(Gln) + L-glutamine + ATP + H2O = L-glutaminyl-tRNA(Gln) + L-glutamate + ADP + phosphate + H(+). Functionally, allows the formation of correctly charged Gln-tRNA(Gln) through the transamidation of misacylated Glu-tRNA(Gln) in organisms which lack glutaminyl-tRNA synthetase. The reaction takes place in the presence of glutamine and ATP through an activated gamma-phospho-Glu-tRNA(Gln). This Legionella pneumophila subsp. pneumophila (strain Philadelphia 1 / ATCC 33152 / DSM 7513) protein is Glutamyl-tRNA(Gln) amidotransferase subunit A.